A 325-amino-acid polypeptide reads, in one-letter code: Gibberellin 20-oxidase-like protein (325 aa).

In terms of domain architecture, Fe2OG dioxygenase spans 152–266; sequence CHGYFRINNY…RFSLAFFWCF (115 aa). Residues H186, D188, and H244 each coordinate Fe cation. R257 contributes to the 2-oxoglutarate binding site.

Belongs to the iron/ascorbate-dependent oxidoreductase family. GA20OX subfamily. Fe(2+) serves as cofactor. Highly expressed in elongation zone of lateral roots.

Negative regulator of root hair growth. The protein is Gibberellin 20-oxidase-like protein of Arabidopsis thaliana (Mouse-ear cress).